The sequence spans 385 residues: Methionine aminopeptidase 1 (385 aa).

Residues 6–59 (SRVCETEGCSSEAKLQCPTCIKLGIQGSYFCSQECFKGSWATHKLLHKKAKDDK) form a C6H2-type zinc finger. Residues C9, C14, C22, C25, C36, C40, H48, and H52 each contribute to the Zn(2+) site. H203 serves as a coordination point for a protein. D220, D231, and H294 together coordinate Zn(2+). Position 301 (H301) interacts with a protein. Zn(2+) contacts are provided by E327 and E358.

The protein belongs to the peptidase M24A family. Methionine aminopeptidase type 1 subfamily. Associates with the 60S ribosomal subunit of the 80S translational complex. Zn(2+) is required as a cofactor. It depends on Co(2+) as a cofactor. Requires Mn(2+) as cofactor. The cofactor is Fe(2+).

It is found in the cytoplasm. The catalysed reaction is Release of N-terminal amino acids, preferentially methionine, from peptides and arylamides.. Functionally, cotranslationally removes the N-terminal methionine from nascent proteins. The N-terminal methionine is often cleaved when the second residue in the primary sequence is small and uncharged (Met-Ala-, Cys, Gly, Pro, Ser, Thr, or Val). This chain is Methionine aminopeptidase 1 (metap1), found in Xenopus laevis (African clawed frog).